Here is a 95-residue protein sequence, read N- to C-terminus: Small ribosomal subunit protein uS19 (95 aa).

Positions 76–95 are disordered; the sequence is PTRRFGGHADKKAKKGELKK. The segment covering 82-95 has biased composition (basic and acidic residues); that stretch reads GHADKKAKKGELKK.

Belongs to the universal ribosomal protein uS19 family.

In terms of biological role, protein S19 forms a complex with S13 that binds strongly to the 16S ribosomal RNA. The chain is Small ribosomal subunit protein uS19 (rpsS) from Thermotoga maritima (strain ATCC 43589 / DSM 3109 / JCM 10099 / NBRC 100826 / MSB8).